Here is a 398-residue protein sequence, read N- to C-terminus: Serine/threonine-protein phosphatase 4 regulatory subunit 2-B (398 aa).

Residues 138-398 (SSEKNTSPSL…NAPEEPMEQD (261 aa)) form a disordered region. 3 stretches are compositionally biased toward polar residues: residues 139–149 (SEKNTSPSLNR), 156–170 (PSNS…NVNG), and 183–193 (TLSSPMNTNGL). Basic and acidic residues predominate over residues 197-211 (MENKESDLQQKEKSL). Positions 278–294 (ASTSADKGKESCQTAQT) are enriched in polar residues. The span at 338–366 (SESACSLNSEEPNSAAAAASTAGTDSSEG) shows a compositional bias: low complexity.

The protein belongs to the PPP4R2 family. As to quaternary structure, serine/threonine-protein phosphatase 4 (PP4) occurs in different assemblies of the catalytic and one or more regulatory subunits.

In terms of biological role, regulatory subunit of serine/threonine-protein phosphatase 4 (PP4). The polypeptide is Serine/threonine-protein phosphatase 4 regulatory subunit 2-B (ppp4r2-b) (Xenopus laevis (African clawed frog)).